A 433-amino-acid chain; its full sequence is MSMVVQPVEEKAVHSWSRISTAGKKALEEALLVFNPMSQDLSATEAQLVAFLQGLRDDGFQPTILRSGDVYGYSSCTASPPSQTKLQARTINPPATSLPKTAVSVPAGRTTLLPVPLSGRLAKGSTAALAKHATTNLLLSSLKQSSASNSSGTTVGFPAHLYPGVYPAMRLSVVLEALVPLKTPCLDVKHGAQSLQLSLAKSPLKVRKASGNPKSKAPRKITSKGLKHLTSKGPGAGLRRGAGTQSNGAQRKGCSALGPKTVQAQASQTLIKAARAHASVAQTQTKTVRVRAKAKQAKPKAARAKAKAAVVRDKAKDKVIQAKAKAAQTKHKGKPKGSVQTRTGRANRKNSSETVGRKRKKAEETKGLPPKKRARCVPRPPKVWLGPGTAKPRKSQTIKVDRKCSDDEVRQCAQQILRVNLSPVVWLQPLLPF.

Serine 125 bears the Phosphoserine mark. 3 disordered regions span residues 204-256, 284-310, and 325-396; these read LKVR…GCSA, QTKTVRVRAKAKQAKPKAARAKAKAAV, and KAAQ…RKSQ. Basic residues-rich tracts occupy residues 216–230 and 288–306; these read KAPRKITSKGLKHLT and VRVRAKAKQAKPKAARAKA. A coiled-coil region spans residues 260-330; the sequence is KTVQAQASQT…QAKAKAAQTK (71 aa).

The polypeptide is Coiled-coil domain-containing protein 71 (Ccdc71) (Mus musculus (Mouse)).